The sequence spans 358 residues: Mitogen-activated protein kinase hog-1 (358 aa).

The region spanning 20–299 is the Protein kinase domain; the sequence is YSDLQPVGMG…ATEALSHEYL (280 aa). ATP-binding positions include 26–34 and lysine 49; that span reads VGMGAFGLV. Aspartate 141 (proton acceptor) is an active-site residue. Threonine 171 is subject to Phosphothreonine. Residues 171–173 carry the TXY motif; sequence TGY. The residue at position 173 (tyrosine 173) is a Phosphotyrosine.

Belongs to the protein kinase superfamily. Ser/Thr protein kinase family. MAP kinase subfamily. HOG1 sub-subfamily. It depends on Mg(2+) as a cofactor. Post-translationally, dually phosphorylated on Thr-171 and Tyr-173, which activates the enzyme. Phosphorylation is induced by fungicides and osmotic stress.

Its subcellular location is the cytoplasm. The protein localises to the nucleus. The catalysed reaction is L-seryl-[protein] + ATP = O-phospho-L-seryl-[protein] + ADP + H(+). It catalyses the reaction L-threonyl-[protein] + ATP = O-phospho-L-threonyl-[protein] + ADP + H(+). Activated by tyrosine and threonine phosphorylation. In terms of biological role, proline-directed serine/threonine-protein kinase involved in a signal transduction pathway that is activated by changes in the osmolarity of the extracellular environment. Controls osmotic regulation of transcription of target genes. Involved in ion flux-mediated turgor regulation. The chain is Mitogen-activated protein kinase hog-1 (hog-1) from Neurospora crassa (strain ATCC 24698 / 74-OR23-1A / CBS 708.71 / DSM 1257 / FGSC 987).